The chain runs to 400 residues: Cytohesin-2 (400 aa).

Positions 10 to 63 form a coiled coil; the sequence is DLTPEERMELENIRRRKQELLVEIQRLREELSEAMSEVEGLEANEGSKTLQRNR. The 130-residue stretch at 72–201 folds into the SEC7 domain; the sequence is FNMDPKKGIQ…VIMLNTSLHN (130 aa). Residues 259-376 form the PH domain; it reads NPDREGWLLK…WIKSIQAAVS (118 aa). A 1,2-diacyl-sn-glycero-3-phospho-(1D-myo-inositol-3,4,5-trisphosphate) is bound by residues 268–276, arginine 280, tyrosine 291, arginine 301, lysine 339, asparagine 350, and histidine 351; that span reads KLGGGRVKT. The segment at 387 to 395 is C-terminal autoinhibitory region; the sequence is RKKRISVKK.

As to quaternary structure, heteromer. Composed of TAMALIN, CYTH2 and at least one GRM1. Interacts with ARRB1. Interacts with ARL4D; the interaction is direct. Directly interacts with CCDC120 through the coiled coil domain; this interaction stabilizes CCDC120, possibly by preventing its ubiquitination, and is required for neurite growth in neuroblastoma cells. Interacts with ARF1. Interacts with FRMD4A. Interacts (via N-terminal domain) with INAVA (via N-terminal domain). Widely expressed.

The protein resides in the cell membrane. The protein localises to the cytoplasm. It localises to the cell projection. Its subcellular location is the growth cone. It is found in the cell junction. The protein resides in the tight junction. The protein localises to the adherens junction. Functionally, acts as a guanine-nucleotide exchange factor (GEF). Promotes guanine-nucleotide exchange on ARF1, ARF3 and ARF6. Activates ARF factors through replacement of GDP with GTP. The cell membrane form, in association with ARL4 proteins, recruits ARF6 to the plasma membrane. Involved in neurite growth. The polypeptide is Cytohesin-2 (Homo sapiens (Human)).